We begin with the raw amino-acid sequence, 621 residues long: MTDNAPITFDGKRFAAHLSMAPGVYCMYAADDTLLYVGKAGALRKRVASYFNGTPKNTRLTAMLAQVVRMDVTITRNEAEALLLENQLIKSLAPRYNVLLRDDKSYPYVLLTREAWPRIALHRGPQIVPGRYFGPYPGVTAVRDMLNLIHKLFKLRSCEDSVFRNRSRPCLQYQIGRCSAPCVNVVTHDNYTEAVRRVTLFLEGKSDLLAEELIQAMQVASEHLEFEQAARLRDLLTSLRSMQNRQYVDGRAADLDVLACAALSGHACVLLLSFRDGRNLGTRMFFPKTNGEERTAEILSAFVSQYYAEYPPPPEILLDQEIPDHTLLEAAFSRSSAHKISLRWNVRGERAGYVELAVRNAQVALSTELTSQRAQRVRSEAVRQLLGLEEPIKRVECFDISHTMGEATVASCVVFDAVGPVRSQYRRYNITGITPGDDYAAMRQAIERRFRRAVEEDKQGERPDVLFIDGGAGQLAQAKMALNAVGVESVLLVGVSKGEERRAGHETLIMLDGQELHPGAASPALQFIQQVRDEAHRFAITGHRARRQKTRMTSKLEDIPGIGSRRRANLLKHFGGLAGVKAAGQTEIARVEGISTALAAKIYASLHGLSKSDAVNASRVS.

The region spanning 20 to 98 is the GIY-YIG domain; that stretch reads MAPGVYCMYA…IKSLAPRYNV (79 aa). The 36-residue stretch at 207–242 folds into the UVR domain; that stretch reads DLLAEELIQAMQVASEHLEFEQAARLRDLLTSLRSM.

Belongs to the UvrC family. In terms of assembly, interacts with UvrB in an incision complex.

The protein resides in the cytoplasm. Functionally, the UvrABC repair system catalyzes the recognition and processing of DNA lesions. UvrC both incises the 5' and 3' sides of the lesion. The N-terminal half is responsible for the 3' incision and the C-terminal half is responsible for the 5' incision. This chain is UvrABC system protein C, found in Xylella fastidiosa (strain 9a5c).